Here is a 636-residue protein sequence, read N- to C-terminus: Molybdenum cofactor biosynthesis protein 1 (636 aa).

Residues 1–383 (MAARPAFGIV…QMKNRPMILI (383 aa)) form a molybdenum cofactor biosynthesis protein A region. The interval 19-40 (RGCSSGAPVTQPRPGEPSRPTR) is disordered. Ser64 bears the Phosphoserine mark. The Radical SAM core domain occupies 64–279 (SFGRQHSYLR…TIRQRWPGLE (216 aa)). Arg73 contributes to the GTP binding site. [4Fe-4S] cluster contacts are provided by Cys80 and Cys84. Tyr86 is a binding site for S-adenosyl-L-methionine. Cys87 is a [4Fe-4S] cluster binding site. Position 123 (Arg123) interacts with GTP. Gly127 serves as a coordination point for S-adenosyl-L-methionine. Thr154 is a binding site for GTP. Ser178 is a binding site for S-adenosyl-L-methionine. At Lys198 the chain carries N6-acetyllysine. Residue Lys215 participates in GTP binding. An S-adenosyl-L-methionine-binding site is contributed by Met249. 2 residues coordinate [4Fe-4S] cluster: Cys312 and Cys315. A GTP-binding site is contributed by 317 to 319 (RLR). Cys329 is a binding site for [4Fe-4S] cluster. The interval 414–636 (QCLSDQMASL…GGQRGDFHRA (223 aa)) is molybdenum cofactor biosynthesis protein C. The segment at 444-484 (SPQRHYSSYPDPDTHSKCLSTGSQAPDAPSGPGPTSNQLTH) is disordered. At Lys528 the chain carries N6-acetyllysine. The active-site For molybdenum cofactor biosynthesis protein C activity is Asp606.

This sequence in the C-terminal section; belongs to the MoaC family. The protein in the N-terminal section; belongs to the radical SAM superfamily. MoaA family. As to quaternary structure, isoform Mocs1a and isoform Mocs1b probably form a heterooligomer. [4Fe-4S] cluster serves as cofactor.

It catalyses the reaction GTP + AH2 + S-adenosyl-L-methionine = (8S)-3',8-cyclo-7,8-dihydroguanosine 5'-triphosphate + 5'-deoxyadenosine + L-methionine + A + H(+). It carries out the reaction (8S)-3',8-cyclo-7,8-dihydroguanosine 5'-triphosphate = cyclic pyranopterin phosphate + diphosphate. Its pathway is cofactor biosynthesis; molybdopterin biosynthesis. Its function is as follows. Isoform Mocs1a and isoform Mocs1b probably form a complex that catalyzes the conversion of 5'-GTP to cyclic pyranopterin monophosphate (cPMP). Mocs1a catalyzes the cyclization of GTP to (8S)-3',8-cyclo-7,8-dihydroguanosine 5'-triphosphate and Mocs1b catalyzes the subsequent conversion of (8S)-3',8-cyclo-7,8-dihydroguanosine 5'-triphosphate to cPMP. This Mus musculus (Mouse) protein is Molybdenum cofactor biosynthesis protein 1 (Mocs1).